A 591-amino-acid polypeptide reads, in one-letter code: Aspartate--tRNA(Asp/Asn) ligase (591 aa).

Residue Glu176 coordinates L-aspartate. The segment at 200–203 is aspartate; it reads QLFK. Arg222 is an L-aspartate binding site. ATP is bound by residues 222–224 and Gln231; that span reads RDE. His450 contributes to the L-aspartate binding site. Residue Glu484 participates in ATP binding. Arg491 provides a ligand contact to L-aspartate. Residue 536 to 539 participates in ATP binding; sequence GLDR.

The protein belongs to the class-II aminoacyl-tRNA synthetase family. Type 1 subfamily. As to quaternary structure, homodimer.

Its subcellular location is the cytoplasm. It catalyses the reaction tRNA(Asx) + L-aspartate + ATP = L-aspartyl-tRNA(Asx) + AMP + diphosphate. Aspartyl-tRNA synthetase with relaxed tRNA specificity since it is able to aspartylate not only its cognate tRNA(Asp) but also tRNA(Asn). Reaction proceeds in two steps: L-aspartate is first activated by ATP to form Asp-AMP and then transferred to the acceptor end of tRNA(Asp/Asn). In Bacillus cereus (strain G9842), this protein is Aspartate--tRNA(Asp/Asn) ligase.